The primary structure comprises 478 residues: Cytochrome c-552 (478 aa).

Positions 1 to 26 are cleaved as a signal peptide; that stretch reads MARKTLRARRFFSLIFPFFFITSVYA. Residue histidine 94 coordinates heme c. The heme site is built by cysteine 122, cysteine 125, and lysine 126. Residues cysteine 160, cysteine 163, histidine 164, cysteine 209, cysteine 212, and histidine 213 each contribute to the heme c site. The Ca(2+) site is built by glutamate 215, tyrosine 216, lysine 261, and glutamine 263. Residue tyrosine 216 participates in substrate binding. Position 264 (histidine 264) interacts with substrate. The heme c site is built by histidine 275, cysteine 282, cysteine 285, histidine 286, histidine 301, cysteine 314, cysteine 317, histidine 318, and histidine 393.

It belongs to the cytochrome c-552 family. Ca(2+) is required as a cofactor. Heme c serves as cofactor.

It localises to the periplasm. The enzyme catalyses 6 Fe(III)-[cytochrome c] + NH4(+) + 2 H2O = 6 Fe(II)-[cytochrome c] + nitrite + 8 H(+). It participates in nitrogen metabolism; nitrate reduction (assimilation). In terms of biological role, catalyzes the reduction of nitrite to ammonia, consuming six electrons in the process. The chain is Cytochrome c-552 from Salmonella agona (strain SL483).